The sequence spans 359 residues: Beta-1,3-galactosyltransferase bre-2 (359 aa).

Residues 1–11 are Cytoplasmic-facing; the sequence is MRQSRRASSRV. Residues 12–29 traverse the membrane as a helical; Signal-anchor for type II membrane protein segment; it reads NRLVVIFIIVASGFLLLY. The Lumenal segment spans residues 30 to 359; the sequence is KNTQQFTQID…NPDLEELKEK (330 aa). 3 N-linked (GlcNAc...) asparagine glycosylation sites follow: asparagine 73, asparagine 163, and asparagine 209.

Belongs to the glycosyltransferase 31 family.

Its subcellular location is the golgi apparatus membrane. It functions in the pathway protein modification; protein glycosylation. Functionally, transfers N-acetylgalactosamine onto carbohydrate substrates. Involved in susceptibility to pore-forming crystal toxins in conjunction with bre-1, bre-3, bre-4, and bre-5. Involved in resistance to the nematotoxic C.cinerea galectin Cgl2. The sequence is that of Beta-1,3-galactosyltransferase bre-2 from Caenorhabditis elegans.